We begin with the raw amino-acid sequence, 155 residues long: Cytochrome c-type biogenesis protein CcmE (155 aa).

Residues 1–8 (MNPVRKKR) lie on the Cytoplasmic side of the membrane. The chain crosses the membrane as a helical; Signal-anchor for type II membrane protein span at residues 9-29 (LFIVLAILAGVGIAVALALSA). The Periplasmic segment spans residues 30–155 (LQQNINLFYT…YEGGKQEYAK (126 aa)). Residues His-124 and Tyr-128 each coordinate heme.

The protein belongs to the CcmE/CycJ family.

Its subcellular location is the cell inner membrane. Functionally, heme chaperone required for the biogenesis of c-type cytochromes. Transiently binds heme delivered by CcmC and transfers the heme to apo-cytochromes in a process facilitated by CcmF and CcmH. The chain is Cytochrome c-type biogenesis protein CcmE from Stutzerimonas stutzeri (strain A1501) (Pseudomonas stutzeri).